Consider the following 156-residue polypeptide: Transcription elongation factor GreA (156 aa).

Belongs to the GreA/GreB family.

Its function is as follows. Necessary for efficient RNA polymerase transcription elongation past template-encoded arresting sites. The arresting sites in DNA have the property of trapping a certain fraction of elongating RNA polymerases that pass through, resulting in locked ternary complexes. Cleavage of the nascent transcript by cleavage factors such as GreA or GreB allows the resumption of elongation from the new 3'terminus. GreA releases sequences of 2 to 3 nucleotides. This Thermomicrobium roseum (strain ATCC 27502 / DSM 5159 / P-2) protein is Transcription elongation factor GreA.